The primary structure comprises 266 residues: Translation initiation factor 2 subunit alpha (266 aa).

Residues 12–83 (GEILIATVKQ…RKGTVDVSLK (72 aa)) form the S1 motif domain.

This sequence belongs to the eIF-2-alpha family. Heterotrimer composed of an alpha, a beta and a gamma chain.

In terms of biological role, eIF-2 functions in the early steps of protein synthesis by forming a ternary complex with GTP and initiator tRNA. In Saccharolobus islandicus (strain Y.N.15.51 / Yellowstone #2) (Sulfolobus islandicus), this protein is Translation initiation factor 2 subunit alpha.